A 715-amino-acid chain; its full sequence is MVPGARGGGALARAAGRGLLALLLAVSAPLRLQAEELGDGCGHLVTYQDSGTMTSKNYPGTYPNHTVCEKTITVPKGKRLILRLGDLDIESQTCASDYLLFTSSSDQYGPYCGSMTVPKELLLNTSEVTVRFESGSHISGRGFLLTYASSDHPDLITCLERASHYLKTEYSKFCPAGCRDVAGDISGNMVDGYRDTSLLCKAAIHAGIIADELGGQISVLQRKGISRYEGILANGVLSRDGSLSDKRFLFTSNGCSRSLSFEPDGQIRASSSWQSVNESGDQVHWSPGQARLQDQGPSWASGDSSNNHKPREWLEIDLGEKKKITGIRTTGSTQSNFNFYVKSFVMNFKNNNSKWKTYKGIVNNEEKVFQGNSNFRDPVQNNFIPPIVARYVRVVPQTWHQRIALKVELIGCQITQGNDSLVWRKTSQSTSVSTKKEDETITRPIPSEETSTGINITTVAIPLVLLVVLVFAGMGIFAAFRKKKKKGSPYGSAEAQKTDCWKQIKYPFARHQSAEFTISYDNEKEMTQKLDLITSDMADYQQPLMIGTGTVTRKGSTFRPMDTDAEEAGVSTDAGGHYDCPQRAGRHEYALPLAPPEPEYATPIVERHVLRAHTFSAQSGYRVPGPQPGHKHSLSSGGFSPVAGVGAQDGDYQRPHSAQPADRGYDRPKAVSALATESGHPDSQKPPTHPGTSDSYSAPRDCLTPLNQTAMTALL.

The N-terminal stretch at 1–34 (MVPGARGGGALARAAGRGLLALLLAVSAPLRLQA) is a signal peptide. Topologically, residues 35-459 (EELGDGCGHL…TSTGINITTV (425 aa)) are extracellular. 2 disulfides stabilise this stretch: Cys-41–Cys-68 and Cys-94–Cys-112. Positions 41-150 (CGHLVTYQDS…RGFLLTYASS (110 aa)) constitute a CUB domain. Asn-64 is a glycosylation site (N-linked (GlcNAc...) asparagine). Asn-124 carries N-linked (GlcNAc...) asparagine glycosylation. An LCCL domain is found at 152-248 (HPDLITCLER…RDGSLSDKRF (97 aa)). Disulfide bonds link Cys-158–Cys-174 and Cys-178–Cys-200. The F5/8 type C domain occupies 248–412 (FLFTSNGCSR…IALKVELIGC (165 aa)). Asn-277 carries N-linked (GlcNAc...) asparagine glycosylation. A disordered region spans residues 278–312 (ESGDQVHWSPGQARLQDQGPSWASGDSSNNHKPRE). A compositionally biased stretch (polar residues) spans 295-307 (QGPSWASGDSSNN). N-linked (GlcNAc...) asparagine glycans are attached at residues Asn-351, Asn-418, and Asn-455. A helical membrane pass occupies residues 460 to 480 (AIPLVLLVVLVFAGMGIFAAF). Topologically, residues 481 to 715 (RKKKKKGSPY…LNQTAMTALL (235 aa)) are cytoplasmic. Ser-513 carries the phosphoserine modification. Thr-614 carries the post-translational modification Phosphothreonine. The disordered stretch occupies residues 619 to 702 (SGYRVPGPQP…SDSYSAPRDC (84 aa)).

The protein localises to the membrane. The protein is Discoidin, CUB and LCCL domain-containing protein 1 (DCBLD1) of Homo sapiens (Human).